Here is a 352-residue protein sequence, read N- to C-terminus: Fe(3+) ions import ATP-binding protein FbpC (352 aa).

The ABC transporter domain maps to 5–239 (LHIGHLSKSF…PADLDAALFI (235 aa)). Residue 37 to 44 (GASGCGKT) coordinates ATP.

Belongs to the ABC transporter superfamily. Fe(3+) ion importer (TC 3.A.1.10) family. The complex is composed of two ATP-binding proteins (FbpC), two transmembrane proteins (FbpB) and a solute-binding protein (FbpA).

Its subcellular location is the cell inner membrane. It catalyses the reaction Fe(3+)(out) + ATP + H2O = Fe(3+)(in) + ADP + phosphate + H(+). Its function is as follows. Part of the ABC transporter complex FbpABC involved in Fe(3+) ions import. Responsible for energy coupling to the transport system. The protein is Fe(3+) ions import ATP-binding protein FbpC of Neisseria meningitidis serogroup A / serotype 4A (strain DSM 15465 / Z2491).